A 130-amino-acid polypeptide reads, in one-letter code: Small ribosomal subunit protein uS8A (130 aa).

The protein belongs to the universal ribosomal protein uS8 family.

The sequence is that of Small ribosomal subunit protein uS8A (RpS15Aa) from Drosophila melanogaster (Fruit fly).